The following is a 414-amino-acid chain: Isocitrate dehydrogenase [NADP] cytoplasmic (414 aa).

Residue S2 is modified to N-acetylserine. Y42 carries the post-translational modification Phosphotyrosine. T75–T77 is an NADP(+) binding site. T77 is a binding site for substrate. An N6-acetyllysine modification is found at K81. R82 is a binding site for NADP(+). Substrate contacts are provided by residues S94–R100 and R109. K126 carries the N6-succinyllysine modification. Substrate contacts are provided by R132 and K212. 2 positions are modified to N6-acetyllysine: K224 and K233. D252 serves as a coordination point for Mn(2+). K260 serves as a coordination point for NADP(+). D275 and D279 together coordinate Mn(2+). G310 to H315 lines the NADP(+) pocket. Residue K321 is modified to N6-acetyllysine. An NADP(+)-binding site is contributed by N328. At S389 the chain carries Phosphoserine. K400 carries the N6-succinyllysine modification.

It belongs to the isocitrate and isopropylmalate dehydrogenases family. As to quaternary structure, homodimer. The cofactor is Mg(2+). It depends on Mn(2+) as a cofactor. Acetylation at Lys-374 dramatically reduces catalytic activity. Expressed preferentially in corneal epithelium. Constitute approximately 13% of the total soluble bovine corneal epithelial proteins.

The protein resides in the cytoplasm. Its subcellular location is the cytosol. It carries out the reaction D-threo-isocitrate + NADP(+) = 2-oxoglutarate + CO2 + NADPH. In terms of biological role, catalyzes the NADP(+)-dependent oxidative decarboxylation of isocitrate (D-threo-isocitrate) to 2-ketoglutarate (2-oxoglutarate), which is required by other enzymes such as the phytanoyl-CoA dioxygenase. Plays a critical role in the generation of NADPH, an important cofactor in many biosynthesis pathways. May act as a corneal epithelial crystallin and may be involved in maintaining corneal epithelial transparency. The polypeptide is Isocitrate dehydrogenase [NADP] cytoplasmic (IDH1) (Bos taurus (Bovine)).